A 121-amino-acid polypeptide reads, in one-letter code: Phosphoribosyl-ATP pyrophosphatase (121 aa).

The protein belongs to the PRA-PH family.

The protein localises to the cytoplasm. The enzyme catalyses 1-(5-phospho-beta-D-ribosyl)-ATP + H2O = 1-(5-phospho-beta-D-ribosyl)-5'-AMP + diphosphate + H(+). It participates in amino-acid biosynthesis; L-histidine biosynthesis; L-histidine from 5-phospho-alpha-D-ribose 1-diphosphate: step 2/9. The chain is Phosphoribosyl-ATP pyrophosphatase from Burkholderia vietnamiensis (strain G4 / LMG 22486) (Burkholderia cepacia (strain R1808)).